The primary structure comprises 541 residues: Protein wntless homolog (541 aa).

An N-terminal signal peptide occupies residues M1–A42. Residues V43–K232 are Lumenal-facing. Residues V233–W253 traverse the membrane as a helical segment. At R254–K268 the chain is on the cytoplasmic side. The helical transmembrane segment at V269–I289 threads the bilayer. Topologically, residues G290–R303 are lumenal. Residues Q304–M324 form a helical membrane-spanning segment. At D325–R331 the chain is on the cytoplasmic side. A helical transmembrane segment spans residues L332–F352. The Lumenal portion of the chain corresponds to D353 to A380. The helical transmembrane segment at F381–F401 threads the bilayer. Residues Q402–R431 lie on the Cytoplasmic side of the membrane. A helical transmembrane segment spans residues F432–V452. The Lumenal segment spans residues S453 to S471. A helical membrane pass occupies residues A472–Y492. Residues A493–E541 lie on the Cytoplasmic side of the membrane.

It belongs to the wntless family.

It localises to the golgi apparatus membrane. Its subcellular location is the cytoplasmic vesicle membrane. Functionally, may play an essential role in Wnt signaling pathway. May be required for Wnt-dependent patterning processes. This Gallus gallus (Chicken) protein is Protein wntless homolog (WLS).